Here is a 189-residue protein sequence, read N- to C-terminus: MALPFALMMALVVLSCKSSCSLGCNLSQTHSLNNRRTLMLMAQMRRISPFSCLKDRHDFEFPQEEFDGNQFQKAQAISVLHEMMQQTFNLFSTKNSSAAWDETLLEKFYIELFQQMNDLEACVIQEVGVEETPLMNEDSILAVKKYFQRITLYLMEKKYSPCAWEVVRAEIMRSLSFSTNLQKRLRRKD.

The first 23 residues, 1 to 23, serve as a signal peptide directing secretion; that stretch reads MALPFALMMALVVLSCKSSCSLG. 2 disulfide bridges follow: cysteine 24–cysteine 122 and cysteine 52–cysteine 162. Residue asparagine 95 is glycosylated (N-linked (GlcNAc...) asparagine).

This sequence belongs to the alpha/beta interferon family.

Its subcellular location is the secreted. Its function is as follows. Produced by macrophages, IFN-alpha have antiviral activities. Interferon stimulates the production of two enzymes: a protein kinase and an oligoadenylate synthetase. This chain is Interferon alpha-14 (IFNA14), found in Homo sapiens (Human).